A 100-amino-acid polypeptide reads, in one-letter code: Small ribosomal subunit protein uS14c (100 aa).

Belongs to the universal ribosomal protein uS14 family. In terms of assembly, part of the 30S ribosomal subunit.

It is found in the plastid. Its subcellular location is the chloroplast. Functionally, binds 16S rRNA, required for the assembly of 30S particles. The sequence is that of Small ribosomal subunit protein uS14c from Stigeoclonium helveticum (Green alga).